A 211-amino-acid polypeptide reads, in one-letter code: Uridine kinase (211 aa).

12–19 (GGSGSGKT) contacts ATP.

This sequence belongs to the uridine kinase family.

It is found in the cytoplasm. It catalyses the reaction uridine + ATP = UMP + ADP + H(+). The catalysed reaction is cytidine + ATP = CMP + ADP + H(+). The protein operates within pyrimidine metabolism; CTP biosynthesis via salvage pathway; CTP from cytidine: step 1/3. Its pathway is pyrimidine metabolism; UMP biosynthesis via salvage pathway; UMP from uridine: step 1/1. In Anoxybacillus flavithermus (strain DSM 21510 / WK1), this protein is Uridine kinase.